Consider the following 85-residue polypeptide: Homeobox protein knotted-1-like 5 (85 aa).

The region spanning 1 to 21 (ELKEMLLKKYSGCLSRLRSEF) is the ELK domain. The homeobox; TALE-type DNA-binding region spans 22–85 (LKKRKKGKLP…NQRKRHWKPS (64 aa)).

This sequence belongs to the TALE/KNOX homeobox family. Strongly expressed in ear inflorescence primordia and shoot meristem. Weakly expressed in embryos. Absent from leaves.

The protein localises to the nucleus. In terms of biological role, probably binds to the DNA sequence 5'-TGAC-3'. The protein is Homeobox protein knotted-1-like 5 (KNOX5) of Zea mays (Maize).